The sequence spans 295 residues: Small ribosomal subunit protein uS2 (295 aa).

The tract at residues Lys-264–Ala-295 is disordered.

This sequence belongs to the universal ribosomal protein uS2 family.

The sequence is that of Small ribosomal subunit protein uS2 from Rickettsia akari (strain Hartford).